The sequence spans 635 residues: UvrABC system protein C (635 aa).

A GIY-YIG domain is found at 20–97 (ERSGVYRMFD…IKKFQPKFNI (78 aa)). The UVR domain occupies 207-242 (KELQENLSKKMEELSEQMRFEEAAEIRDRIKALSYV).

It belongs to the UvrC family. In terms of assembly, interacts with UvrB in an incision complex.

It localises to the cytoplasm. Functionally, the UvrABC repair system catalyzes the recognition and processing of DNA lesions. UvrC both incises the 5' and 3' sides of the lesion. The N-terminal half is responsible for the 3' incision and the C-terminal half is responsible for the 5' incision. This chain is UvrABC system protein C, found in Rickettsia bellii (strain RML369-C).